A 975-amino-acid polypeptide reads, in one-letter code: Ionotropic receptor 21a (975 aa).

The N-terminal stretch at 1 to 21 (MFKRIVLAVINLVFLIVSTTA) is a signal peptide. N-linked (GlcNAc...) asparagine glycosylation is found at asparagine 67, asparagine 177, and asparagine 355. A helical membrane pass occupies residues 433-453 (WPVWVAVILIYLLAIFPLAFS). N-linked (GlcNAc...) asparagine glycosylation is present at asparagine 464. Residues 505–525 (IYWVFTIIITACYTGSIIAFI) form a helical membrane-spanning segment. N-linked (GlcNAc...) asparagine glycosylation is found at asparagine 561, asparagine 586, and asparagine 611. Residues 708 to 728 (MFLLMLFGYVVALGVLISEWV) traverse the membrane as a helical segment. Disordered regions lie at residues 757–839 (ATAG…HSLS) and 911–938 (SPHS…RKEM). Polar residues-rich tracts occupy residues 760–777 (GSDN…TNRN) and 788–800 (VENS…NGSA). Asparagine 763 and asparagine 797 each carry an N-linked (GlcNAc...) asparagine glycan.

The protein belongs to the glutamate-gated ion channel (TC 1.A.10.1) family. In terms of tissue distribution, in both female and male antenna, expressed specifically in 3 sensory neurons of flagellomere 13 segment (at protein level).

The protein resides in the cell projection. It is found in the cilium membrane. Functionally, integral part of a neural sensory system in the antenna that provides the neural basis for the response to environmental changes in temperature (thermosensation). Specifically, required for thermosensing by the cooling cell. Plays a role in heat seeking and heat-stimulated blood feeding behavior. In Anopheles gambiae (African malaria mosquito), this protein is Ionotropic receptor 21a.